A 459-amino-acid chain; its full sequence is Putrescine aminotransferase (459 aa).

Residues 150–151 (GT) and glutamine 274 each bind pyridoxal 5'-phosphate. Lysine 300 is subject to N6-(pyridoxal phosphate)lysine. Threonine 332 is a binding site for pyridoxal 5'-phosphate.

The protein belongs to the class-III pyridoxal-phosphate-dependent aminotransferase family. Putrescine aminotransferase subfamily. Pyridoxal 5'-phosphate is required as a cofactor.

The catalysed reaction is an alkane-alpha,omega-diamine + 2-oxoglutarate = an omega-aminoaldehyde + L-glutamate. The enzyme catalyses putrescine + 2-oxoglutarate = 1-pyrroline + L-glutamate + H2O. It catalyses the reaction cadaverine + 2-oxoglutarate = 5-aminopentanal + L-glutamate. Its pathway is amine and polyamine degradation; putrescine degradation; 4-aminobutanal from putrescine (transaminase route): step 1/1. Functionally, catalyzes the aminotransferase reaction from putrescine to 2-oxoglutarate, leading to glutamate and 4-aminobutanal, which spontaneously cyclizes to form 1-pyrroline. This is the first step in one of two pathways for putrescine degradation, where putrescine is converted into 4-aminobutanoate (gamma-aminobutyrate or GABA) via 4-aminobutanal. Also functions as a cadaverine transaminase in a a L-lysine degradation pathway to succinate that proceeds via cadaverine, glutarate and L-2-hydroxyglutarate. This is Putrescine aminotransferase from Escherichia coli O17:K52:H18 (strain UMN026 / ExPEC).